Reading from the N-terminus, the 158-residue chain is SsrA-binding protein (158 aa).

It belongs to the SmpB family.

The protein localises to the cytoplasm. In terms of biological role, required for rescue of stalled ribosomes mediated by trans-translation. Binds to transfer-messenger RNA (tmRNA), required for stable association of tmRNA with ribosomes. tmRNA and SmpB together mimic tRNA shape, replacing the anticodon stem-loop with SmpB. tmRNA is encoded by the ssrA gene; the 2 termini fold to resemble tRNA(Ala) and it encodes a 'tag peptide', a short internal open reading frame. During trans-translation Ala-aminoacylated tmRNA acts like a tRNA, entering the A-site of stalled ribosomes, displacing the stalled mRNA. The ribosome then switches to translate the ORF on the tmRNA; the nascent peptide is terminated with the 'tag peptide' encoded by the tmRNA and targeted for degradation. The ribosome is freed to recommence translation, which seems to be the essential function of trans-translation. This is SsrA-binding protein from Caldicellulosiruptor saccharolyticus (strain ATCC 43494 / DSM 8903 / Tp8T 6331).